Consider the following 206-residue polypeptide: Thymidylate kinase (206 aa).

ATP is bound at residue 11–18; the sequence is GIDGAGKT.

This sequence belongs to the thymidylate kinase family.

It carries out the reaction dTMP + ATP = dTDP + ADP. Its function is as follows. Phosphorylation of dTMP to form dTDP in both de novo and salvage pathways of dTTP synthesis. In Burkholderia ambifaria (strain MC40-6), this protein is Thymidylate kinase.